The sequence spans 227 residues: PKHD-type hydroxylase Bcep18194_B0892 (227 aa).

Residues 78–178 form the Fe2OG dioxygenase domain; sequence KVFPPLFNRY…RVASFFWIQS (101 aa). Residues H96, D98, and H159 each coordinate Fe cation. R169 is a binding site for 2-oxoglutarate.

Fe(2+) serves as cofactor. The cofactor is L-ascorbate.

The sequence is that of PKHD-type hydroxylase Bcep18194_B0892 from Burkholderia lata (strain ATCC 17760 / DSM 23089 / LMG 22485 / NCIMB 9086 / R18194 / 383).